Reading from the N-terminus, the 177-residue chain is Large ribosomal subunit protein uL6 (177 aa).

It belongs to the universal ribosomal protein uL6 family. In terms of assembly, part of the 50S ribosomal subunit.

Its function is as follows. This protein binds to the 23S rRNA, and is important in its secondary structure. It is located near the subunit interface in the base of the L7/L12 stalk, and near the tRNA binding site of the peptidyltransferase center. This chain is Large ribosomal subunit protein uL6, found in Laribacter hongkongensis (strain HLHK9).